The following is a 428-amino-acid chain: Ribosome biogenesis protein WDR12 homolog (428 aa).

The segment at 13–97 (LQVHFTTKQK…EDTIELEYVE (85 aa)) is ubiquitin-like (UBL) domain. WD repeat units lie at residues 109-146 (LHDD…KLTI), 148-190 (GHVA…NTAE), 197-236 (GHER…DKGE), 259-297 (GHRE…IKTE), 299-338 (TGNK…GNFV), 344-384 (GHSQ…APIF), and 388-426 (GHED…DNTK).

Belongs to the WD repeat WDR12/YTM1 family.

Its subcellular location is the nucleus. It is found in the nucleolus. The protein resides in the nucleoplasm. Its function is as follows. Required for maturation of ribosomal RNAs and formation of the large ribosomal subunit. The protein is Ribosome biogenesis protein WDR12 homolog of Anopheles gambiae (African malaria mosquito).